Consider the following 352-residue polypeptide: Isopentenyl-diphosphate delta-isomerase (352 aa).

6–7 (RK) lines the substrate pocket. FMN-binding positions include 63–65 (AMT), serine 93, and asparagine 122. 93-95 (SQR) provides a ligand contact to substrate. Glutamine 160 is a substrate binding site. Glutamate 161 lines the Mg(2+) pocket. Residues lysine 192, threonine 221, 271–273 (GIR), and 292–293 (SQ) contribute to the FMN site.

Belongs to the IPP isomerase type 2 family. Homooctamer. Dimer of tetramers. The cofactor is FMN. NADPH serves as cofactor. Requires Mg(2+) as cofactor.

It is found in the cytoplasm. It catalyses the reaction isopentenyl diphosphate = dimethylallyl diphosphate. Functionally, involved in the biosynthesis of isoprenoids. Catalyzes the 1,3-allylic rearrangement of the homoallylic substrate isopentenyl (IPP) to its allylic isomer, dimethylallyl diphosphate (DMAPP). This is Isopentenyl-diphosphate delta-isomerase from Pyrobaculum aerophilum (strain ATCC 51768 / DSM 7523 / JCM 9630 / CIP 104966 / NBRC 100827 / IM2).